Consider the following 131-residue polypeptide: UPF0102 protein RALTA_A3032 (131 aa).

Over residues 1-12 (MMRSFKSTQEPS) the composition is skewed to polar residues. The tract at residues 1–21 (MMRSFKSTQEPSRQARGAQAE) is disordered.

The protein belongs to the UPF0102 family.

The protein is UPF0102 protein RALTA_A3032 of Cupriavidus taiwanensis (strain DSM 17343 / BCRC 17206 / CCUG 44338 / CIP 107171 / LMG 19424 / R1) (Ralstonia taiwanensis (strain LMG 19424)).